The primary structure comprises 583 residues: MLKEELEGLNISVGIYQNTEEAFTVPLIPLGLKETKDIDFSVILKDFILEHYSEDGYLYEDEITDLMDPRQACRTPSRDEARVELLMTYFIQLGFAWIRFKKYNTSPRIFFYRYDSLNGVLVSQQNLLLEKASVLFNTGALYTQIGTWRYWQMQAGLQSAIDAFQRAAGVLNYLKETFTHTPSYDMSPAMLSVLVKMMLTQAQESVFEKISLPGIRNEFFMLVKVAQEAAKVGEVYQQLHAAMSQALVKENIPYSWASLACVKAHHYTALAHYFTAILLIDHQVKPGMDLDHQEKCLSQLYDHMPEGLTPLATLKNDQQRRQLGKSHLHRAMAHHEESVREASLCKKLRSIEVLQKVLCAAQERSRLTYAQHQEDDDLLNLIHAPSVVAKTEQEPKGPLSVFLANKQWMPPRSNRFTAEEGDLGFTLRGNAPVEVHFLDPYCSALVAGARGGDYIVSIQLVDCKWLTVSEVMKLLKSFGEDEIEMKVVSLLDSTSSMHNKSATYSVGMQKTYSMICLAIDDDNKTDKTQKISKKLSFLSWGTNKNRQKSASTLCLPSVGAARPQVKKKLPSPFSLLNSDSSSY.

The BRO1 domain occupies 26-375; the sequence is PLIPLGLKET…RLTYAQHQED (350 aa). One can recognise a PDZ domain in the interval 412–490; it reads RSNRFTAEEG…DEIEMKVVSL (79 aa).

This Homo sapiens (Human) protein is Putative rhophilin-2-like protein RHPN2P1 (RHPN2P1).